A 118-amino-acid polypeptide reads, in one-letter code: Small ribosomal subunit protein uS13 (118 aa).

Positions Gly-94 to Lys-118 are disordered.

This sequence belongs to the universal ribosomal protein uS13 family. Part of the 30S ribosomal subunit. Forms a loose heterodimer with protein S19. Forms two bridges to the 50S subunit in the 70S ribosome.

Its function is as follows. Located at the top of the head of the 30S subunit, it contacts several helices of the 16S rRNA. In the 70S ribosome it contacts the 23S rRNA (bridge B1a) and protein L5 of the 50S subunit (bridge B1b), connecting the 2 subunits; these bridges are implicated in subunit movement. Contacts the tRNAs in the A and P-sites. This is Small ribosomal subunit protein uS13 from Edwardsiella ictaluri (strain 93-146).